Reading from the N-terminus, the 50-residue chain is Large ribosomal subunit protein bL33B (50 aa).

The protein belongs to the bacterial ribosomal protein bL33 family.

In Streptococcus agalactiae serotype V (strain ATCC BAA-611 / 2603 V/R), this protein is Large ribosomal subunit protein bL33B.